Here is a 529-residue protein sequence, read N- to C-terminus: Mobilization protein A (529 aa).

The tract at residues 311 to 356 is disordered; that stretch reads GKHSAGAGGGVRAAGGPEKGREGADHQAGERGRPERPADGQRHRRG. Over residues 328-356 the composition is skewed to basic and acidic residues; that stretch reads EKGREGADHQAGERGRPERPADGQRHRRG.

In terms of biological role, this protein is essential to promote the specific transfer of the plasmid in the presence of conjugative plasmids. This is Mobilization protein A (mobA) from Escherichia coli.